The following is a 1819-amino-acid chain: Gamma-tubulin complex component 6 (1819 aa).

Disordered stretches follow at residues 810–889 (SEAH…GARP), 929–951 (LPPS…PQEY), and 1000–1023 (RETL…QPTE). Repeat copies occupy residues 1027 to 1053 (GQVS…WNTH), 1054 to 1080 (GHVS…WNTH), 1081 to 1107 (GHVS…WNIH), 1108 to 1134 (GHVS…WNTH), 1135 to 1161 (GHVS…WNTH), 1162 to 1188 (GHVS…WNTH), 1189 to 1215 (GHVS…WNTH), 1216 to 1242 (GHVS…CNTH), and 1243 to 1269 (GHVS…WNTH). Residues 1027-1269 (GQVSGGGLPT…VSTRPRWNTH (243 aa)) are 9 X 27 AA tandem repeats. The segment at 1271-1412 (PIPPPHMVLG…EAEASAAEAQ (142 aa)) is disordered. Over residues 1297–1314 (PPGHTSQSALSLGAQSTV) the composition is skewed to polar residues. A compositionally biased stretch (low complexity) spans 1321 to 1335 (LPVEVGPSLSSPSSG). The segment covering 1384 to 1398 (WPLNSQEDTAAQSSP) has biased composition (polar residues).

This sequence belongs to the TUBGCP family. Component of the gamma-tubulin ring complex (gTuRC) consisting of TUBGCP2, TUBGCP3, TUBGCP4, TUBGCP5 and TUBGCP6 and gamma-tubulin TUBG1 or TUBG2. TUBGCP2, TUBGCP3, TUBGCP4, TUBGCP5 and TUBGCP6 assemble in a 5:5:2:1:1 stoichiometry; each is associated with a gamma-tubulin, thereby arranging 14 gamma-tubulins in a helical manner. Gamma-tubulin at the first position is blocked by TUBGCP3 at the last position, allowing 13 protafilaments to grow into a microtubule. The gTuRC (via TUBGCP3 and TUBGCP6) interacts with ACTB and MZT1; the interactions form a luminal bridge that stabilizes the initial structure during complex assembly. The gTuRC (via TUBGCP2) interacts with MZT2A/MZT2B and CDK5RAP2 (via CM1 motif); the interactions play a role in gTuRC activation.

It localises to the cytoplasm. The protein localises to the cytoskeleton. It is found in the microtubule organizing center. The protein resides in the centrosome. Functionally, component of the gamma-tubulin ring complex (gTuRC) which mediates microtubule nucleation. The gTuRC regulates the minus-end nucleation of alpha-beta tubulin heterodimers that grow into microtubule protafilaments, a critical step in centrosome duplication and spindle formation. The sequence is that of Gamma-tubulin complex component 6 (TUBGCP6) from Homo sapiens (Human).